Here is a 380-residue protein sequence, read N- to C-terminus: Cytochrome b (380 aa).

The next 4 membrane-spanning stretches (helical) occupy residues 28 to 48 (IGSLLGLLLAMQIMTGIFLSL), 72 to 93 (WLVRASHANGASMFFMLMYAHI), 109 to 129 (WLVGGNDFLLSMATAFLGYVL), and 174 to 194 (FYSFHFLLPFVILVFVLVHLL). Residues H78 and H92 each contribute to the heme b site. Residues H178 and H192 each coordinate heme b. H197 serves as a coordination point for a ubiquinone. A run of 4 helical transmembrane segments spans residues 222–243 (WKILWVFVLLCFLLYVLLCYIT), 285–305 (IGGVVALAMSVLYLYTFPLAL), 317–337 (IGQLLFWGYVSLFFLLTWLGA), and 344–364 (YISLALPLTVMFFVVPGLYMI).

This sequence belongs to the cytochrome b family. In terms of assembly, the main subunits of complex b-c1 are: cytochrome b, cytochrome c1 and the Rieske protein. It depends on heme b as a cofactor.

The protein resides in the mitochondrion inner membrane. In terms of biological role, component of the ubiquinol-cytochrome c reductase complex (complex III or cytochrome b-c1 complex) that is part of the mitochondrial respiratory chain. The b-c1 complex mediates electron transfer from ubiquinol to cytochrome c. Contributes to the generation of a proton gradient across the mitochondrial membrane that is then used for ATP synthesis. The sequence is that of Cytochrome b (MT-CYB) from Cepaea nemoralis (Banded wood snail).